The sequence spans 252 residues: Nicotinamide/nicotinic acid mononucleotide adenylyltransferase 3 (252 aa).

Residues Ser-14 and Phe-15 each coordinate NAD(+). Residues His-22 and Lys-56 each coordinate ATP. Residues Trp-90, Thr-93, Gly-135, and Asp-137 each contribute to the NAD(+) site. Lys-140 provides a ligand contact to ATP. The NAD(+) site is built by Leu-147, Trp-148, Arg-167, and Asn-198. An ATP-binding site is contributed by 203–206 (TYIR).

It belongs to the eukaryotic NMN adenylyltransferase family. Homotetramer. The cofactor is Mg(2+). Expressed in lung and spleen with lower levels in placenta and kidney.

The protein localises to the mitochondrion. It carries out the reaction beta-nicotinamide D-ribonucleotide + ATP + H(+) = diphosphate + NAD(+). It catalyses the reaction nicotinate beta-D-ribonucleotide + ATP + H(+) = deamido-NAD(+) + diphosphate. It participates in cofactor biosynthesis; NAD(+) biosynthesis; NAD(+) from nicotinamide D-ribonucleotide: step 1/1. It functions in the pathway cofactor biosynthesis; NAD(+) biosynthesis; deamido-NAD(+) from nicotinate D-ribonucleotide: step 1/1. Its activity is regulated as follows. Activity is strongly inhibited by galotannin. Inhibited by P1-(adenosine-5')-P4-(nicotinic-acid-riboside-5')-tetraphosphate (Nap4AD). Catalyzes the formation of NAD(+) from nicotinamide mononucleotide (NMN) and ATP. Can also use the deamidated form; nicotinic acid mononucleotide (NaMN) as substrate with the same efficiency. Can use triazofurin monophosphate (TrMP) as substrate. Can also use GTP and ITP as nucleotide donors. Also catalyzes the reverse reaction, i.e. the pyrophosphorolytic cleavage of NAD(+). For the pyrophosphorolytic activity, can use NAD(+), NADH, NaAD, nicotinic acid adenine dinucleotide phosphate (NHD), nicotinamide guanine dinucleotide (NGD) as substrates. Fails to cleave phosphorylated dinucleotides NADP(+), NADPH and NaADP(+). Protects against axonal degeneration following injury. May be involved in the maintenance of axonal integrity. Also functions as a stress-response chaperone protein that prevents toxic aggregation of proteins; this function may be independent of its NAD(+) synthesis activity. The sequence is that of Nicotinamide/nicotinic acid mononucleotide adenylyltransferase 3 from Homo sapiens (Human).